Here is a 313-residue protein sequence, read N- to C-terminus: MNVGIKGFGAYAPEKIIDNAYFEQFLDTSDEWISKMTGIKERHWADDDQDTSDLAYEASLKAIADAGIQPEDIDMIIVATATGDMPFPTVANMLQERLGTGKVASMDQLAACSGFMYSMITAKQYVQSGDYHNILVVGADKLSKITDLTDRSTAVLFGDGAGAVIIGEVSDGRGIISYEMGSDGTGGKHLYLDKDTGKLKMNGREVFKFAVRIMGDASTRVVEKANLTSDDIDLFIPHQANIRIMESARERLGISKDKMSVSVNKYGNTSAASIPLSIDQELKNGKIKDDDTIVLVGFGGGLTWGAMTIKWGK.

Residues Cys-112 and His-238 contribute to the active site. The tract at residues 239-243 (QANIR) is ACP-binding. Residue Asn-268 is part of the active site.

It belongs to the thiolase-like superfamily. FabH family. As to quaternary structure, homodimer.

The protein resides in the cytoplasm. The catalysed reaction is malonyl-[ACP] + acetyl-CoA + H(+) = 3-oxobutanoyl-[ACP] + CO2 + CoA. It functions in the pathway lipid metabolism; fatty acid biosynthesis. Catalyzes the condensation reaction of fatty acid synthesis by the addition to an acyl acceptor of two carbons from malonyl-ACP. Catalyzes the first condensation reaction which initiates fatty acid synthesis and may therefore play a role in governing the total rate of fatty acid production. Possesses both acetoacetyl-ACP synthase and acetyl transacylase activities. Its substrate specificity determines the biosynthesis of branched-chain and/or straight-chain of fatty acids. The protein is Beta-ketoacyl-[acyl-carrier-protein] synthase III of Staphylococcus aureus (strain COL).